We begin with the raw amino-acid sequence, 183 residues long: Cell division protein ZapC (183 aa).

This sequence belongs to the ZapC family. Interacts directly with FtsZ.

The protein localises to the cytoplasm. Its function is as follows. Contributes to the efficiency of the cell division process by stabilizing the polymeric form of the cell division protein FtsZ. Acts by promoting interactions between FtsZ protofilaments and suppressing the GTPase activity of FtsZ. This chain is Cell division protein ZapC, found in Proteus mirabilis (strain HI4320).